A 114-amino-acid chain; its full sequence is Fluoride-specific ion channel FluC 2 (114 aa).

4 helical membrane-spanning segments follow: residues 3 to 23 (YVII…ECWL), 31 to 51 (LMTA…WILA), 57 to 77 (GIEL…TFCM), and 92 to 112 (MIYL…GWNV). Gly-67 and Thr-70 together coordinate Na(+).

It belongs to the fluoride channel Fluc/FEX (TC 1.A.43) family.

It localises to the cell membrane. It catalyses the reaction fluoride(in) = fluoride(out). With respect to regulation, na(+) is not transported, but it plays an essential structural role and its presence is essential for fluoride channel function. Its function is as follows. Fluoride-specific ion channel. Important for reducing fluoride concentration in the cell, thus reducing its toxicity. The polypeptide is Fluoride-specific ion channel FluC 2 (Shouchella clausii (strain KSM-K16) (Alkalihalobacillus clausii)).